The sequence spans 731 residues: 1,4-alpha-glucan branching enzyme GlgB (731 aa).

Residue D411 is the Nucleophile of the active site. E464 serves as the catalytic Proton donor.

This sequence belongs to the glycosyl hydrolase 13 family. GlgB subfamily. In terms of assembly, monomer.

It carries out the reaction Transfers a segment of a (1-&gt;4)-alpha-D-glucan chain to a primary hydroxy group in a similar glucan chain.. It participates in glycan biosynthesis; glycogen biosynthesis. Its function is as follows. Catalyzes the formation of the alpha-1,6-glucosidic linkages in glycogen by scission of a 1,4-alpha-linked oligosaccharide from growing alpha-1,4-glucan chains and the subsequent attachment of the oligosaccharide to the alpha-1,6 position. The chain is 1,4-alpha-glucan branching enzyme GlgB from Mycobacterium ulcerans (strain Agy99).